We begin with the raw amino-acid sequence, 1362 residues long: DNA-directed RNA polymerase subunit beta'' (1362 aa).

Residues cysteine 224, cysteine 295, cysteine 302, and cysteine 305 each contribute to the Zn(2+) site.

This sequence belongs to the RNA polymerase beta' chain family. RpoC2 subfamily. In plastids the minimal PEP RNA polymerase catalytic core is composed of four subunits: alpha, beta, beta', and beta''. When a (nuclear-encoded) sigma factor is associated with the core the holoenzyme is formed, which can initiate transcription. It depends on Zn(2+) as a cofactor.

The protein resides in the plastid. The protein localises to the chloroplast. The catalysed reaction is RNA(n) + a ribonucleoside 5'-triphosphate = RNA(n+1) + diphosphate. Functionally, DNA-dependent RNA polymerase catalyzes the transcription of DNA into RNA using the four ribonucleoside triphosphates as substrates. This is DNA-directed RNA polymerase subunit beta'' from Helianthus annuus (Common sunflower).